Reading from the N-terminus, the 396-residue chain is MGAPSALPLLLLLACSWAPGGANLSQDDSQPWTSDETVVAGGTVVLKCQVKDHEDSSLQWSNPAQQTLYFGEKRALRDNRIQLVSSTPHELSISISNVALADEGEYTCSIFTMPVRTAKSLVTVLGIPQKPIITGYKSSLREKETATLNCQSSGSKPAAQLTWRKGDQELHGDQTRIQEDPNGKTFTVSSSVSFQVTREDDGANIVCSVNHESLKGADRSTSQRIEVLYTPTAMIRPEPAHPREGQKLLLHCEGRGNPVPQQYVWVKEGSEPPLKMTQESALIFPFLNKSDSGTYGCTATSNMGSYTAYFTLNVNDPSPVPSSSSTYHAIIGGIVAFIVFLLLILLIFLGHYLIRHKGTYLTHEAKGSDDAPDADTAIINAEGGQSGGDDKKEYFI.

The first 22 residues, 1 to 22 (MGAPSALPLLLLLACSWAPGGA), serve as a signal peptide directing secretion. One can recognise an Ig-like V-type domain in the interval 23 to 124 (NLSQDDSQPW…VRTAKSLVTV (102 aa)). Over 23 to 328 (NLSQDDSQPW…PVPSSSSTYH (306 aa)) the chain is Extracellular. 3 cysteine pairs are disulfide-bonded: Cys-48–Cys-108, Cys-150–Cys-207, and Cys-252–Cys-297. Ig-like C2-type domains lie at 128–226 (PQKP…QRIE) and 231–313 (PTAM…FTLN). Residue Asn-288 is glycosylated (N-linked (GlcNAc...) asparagine). Residues 329–349 (AIIGGIVAFIVFLLLILLIFL) traverse the membrane as a helical segment. The Cytoplasmic portion of the chain corresponds to 350–396 (GHYLIRHKGTYLTHEAKGSDDAPDADTAIINAEGGQSGGDDKKEYFI). Residues 365 to 396 (AKGSDDAPDADTAIINAEGGQSGGDDKKEYFI) form a disordered region. Ser-386 bears the Phosphoserine mark.

The protein belongs to the nectin family. Homodimer. Can form trans-heterodimers with NECTIN3. Interacts with EPB41L1, DLG3, PALS2 and CASK. In terms of tissue distribution, mainly expressed in brain, in neuronal cell bodies of cerebellum, cortex, hippocampus, hypothalamus and spinal cord. In spinal cord predominantly expressed in motor neurons. Expressed in axons, presynaptic nerve terminals, glia cell processes.

It localises to the cell membrane. Its subcellular location is the cell junction. Involved in cell-cell adhesion. Has both calcium-independent homophilic cell-cell adhesion activity and calcium-independent heterophilic cell-cell adhesion activity with IGSF4, NECTIN1 and NECTIN3. Interaction with EPB41L1 may regulate structure or function of cell-cell junctions. In Mus musculus (Mouse), this protein is Cell adhesion molecule 3 (Cadm3).